The sequence spans 365 residues: Regulatory protein RapG (365 aa).

TPR repeat units follow at residues 135–168, 169–202, 209–242, 244–284, and 326–359; these read GKLYYKLGQNIVSLNHTRQAVKTFREETDYKKKL, ASALITMSGNFTEMSQFEEAEAYLDEAIRITSEL, AQLLHNFGLLHAQSGKSEEAVSKLEEALQNDEYA, SAYY…EPNR, and RELSILAGERYRELELYKEAAHFFYEALQIEELI.

This sequence belongs to the Rap family.

The protein resides in the cytoplasm. Its activity is regulated as follows. Inhibited by PhrG. Its function is as follows. Involved in the regulation of expression of DegU-controlled genes. Inhibits the binding of DegU to the promoter regions of aprE, coding for an extracellular alkaline protease, and comK, a master regulator for development of genetic competence. RapG does not stimulate dephosphorylation of DegU-P. The chain is Regulatory protein RapG (rapG) from Bacillus subtilis (strain 168).